An 899-amino-acid chain; its full sequence is AP-3 complex subunit delta (899 aa).

HEAT repeat units follow at residues 37-74, 155-192, 194-229, 231-267, 268-305, 308-344, 345-382, 384-428, 480-518, 536-580, 590-613, and 614-656; these read QSPE…KLTY, ELAR…QYPE, LRDN…HNPQ, FIQL…IEPK, LRVK…LNSD, DSAV…KINT, DFIA…EDNL, DFVQ…ITAM, RTLA…LLDN, ELQQ…LIIS, SEAL…SLPL, and LLTE…TESE. Disordered regions lie at residues 668-701, 741-768, 782-801, and 849-899; these read DGIV…PTHE, NLSN…KKKK, GVNT…SARN, and AAEE…LTTE. Residues 743–759 are compositionally biased toward low complexity; the sequence is SNSKPSSSGSLVRLSSE. Positions 841–862 form a coiled coil; it reads QRLLDESAAAEEEVVVVKKKKR. A compositionally biased stretch (basic residues) spans 857–880; that stretch reads VKKKKRSKDGSKSSKKKSRSKSKP.

It belongs to the adaptor complexes large subunit family. In terms of assembly, adaptor protein complex 3 (AP-3) is a heterotetramer composed of 2 large adaptins (APL5 and APL6), a medium adaptin (APM3) and a small adaptin (APS3).

It is found in the golgi apparatus. The protein resides in the cytoplasmic vesicle. The protein localises to the clathrin-coated vesicle membrane. In terms of biological role, part of the AP-3 complex, an adaptor-related complex which is not clathrin-associated. The complex is associated with the Golgi region as well as more peripheral structures. It facilitates the budding of vesicles from the Golgi membrane and may be directly involved in trafficking to the vacuole. The protein is AP-3 complex subunit delta (APL5) of Eremothecium gossypii (strain ATCC 10895 / CBS 109.51 / FGSC 9923 / NRRL Y-1056) (Yeast).